Consider the following 683-residue polypeptide: Amphiphysin (683 aa).

Coiled-coil stretches lie at residues 10 to 83 and 144 to 191; these read AKNV…SLHE and DYDS…QEEL. The region spanning 24-240 is the BAR domain; it reads VLQKLGKADE…MTKLGDQHAD (217 aa). Disordered regions lie at residues 244–311, 421–443, and 455–599; these read SIQG…KVTP, AETE…AAAP, and EPKE…ASLS. At Ser252 the chain carries Phosphoserine. At Thr260 the chain carries Phosphothreonine. A compositionally biased stretch (pro residues) spans 261-274; sequence PSPPEEASPLPSPT. Phosphoserine occurs at positions 262, 268, 272, and 276. Thr280 carries the post-translational modification Phosphothreonine. 2 stretches are compositionally biased toward low complexity: residues 424–443 and 468–477; these read EQAL…AAAP and AGETVGTEGS. Phosphoserine is present on Ser496. Basic and acidic residues predominate over residues 539–559; that stretch reads SNHEGEEHQETTTGTETREAT. The segment covering 585–596 has biased composition (low complexity); it reads AATPAPAGAVDA. One can recognise an SH3 domain in the interval 610–683; sequence GFLYKVETLH…FPENFTRHLE (74 aa). Position 626 is a phosphoserine (Ser626).

Heterodimer with BIN1. Binds SH3GLB1. Interacts with REPS1 and SGIP1. Binds AP2A2. Interacts with AP2B1. Interacts with DNM1 and SYNJ1.

The protein localises to the cytoplasmic vesicle. It is found in the secretory vesicle. It localises to the synaptic vesicle membrane. The protein resides in the cytoplasm. Its subcellular location is the cytoskeleton. In terms of biological role, may participate in mechanisms of regulated exocytosis in synapses and certain endocrine cell types. May control the properties of the membrane associated cytoskeleton. In Rattus norvegicus (Rat), this protein is Amphiphysin (Amph).